The primary structure comprises 291 residues: ATP synthase gamma chain (291 aa).

This sequence belongs to the ATPase gamma chain family. In terms of assembly, F-type ATPases have 2 components, CF(1) - the catalytic core - and CF(0) - the membrane proton channel. CF(1) has five subunits: alpha(3), beta(3), gamma(1), delta(1), epsilon(1). CF(0) has three main subunits: a, b and c.

The protein resides in the cell inner membrane. In terms of biological role, produces ATP from ADP in the presence of a proton gradient across the membrane. The gamma chain is believed to be important in regulating ATPase activity and the flow of protons through the CF(0) complex. The chain is ATP synthase gamma chain from Neisseria gonorrhoeae (strain ATCC 700825 / FA 1090).